A 360-amino-acid polypeptide reads, in one-letter code: S-adenosylmethionine:tRNA ribosyltransferase-isomerase (360 aa).

The protein belongs to the QueA family. In terms of assembly, monomer.

It localises to the cytoplasm. The enzyme catalyses 7-aminomethyl-7-carbaguanosine(34) in tRNA + S-adenosyl-L-methionine = epoxyqueuosine(34) in tRNA + adenine + L-methionine + 2 H(+). It participates in tRNA modification; tRNA-queuosine biosynthesis. Transfers and isomerizes the ribose moiety from AdoMet to the 7-aminomethyl group of 7-deazaguanine (preQ1-tRNA) to give epoxyqueuosine (oQ-tRNA). In Sinorhizobium medicae (strain WSM419) (Ensifer medicae), this protein is S-adenosylmethionine:tRNA ribosyltransferase-isomerase.